The sequence spans 534 residues: Pentatricopeptide repeat-containing protein At2g20540 (534 aa).

PPR repeat units lie at residues Ser-41–Pro-71, Asn-72–Leu-106, Asp-108–Phe-142, His-143–Arg-173, Asp-174–Ser-208, Trp-209–Pro-239, Asp-240–Lys-274, Gln-275–Lys-305, Asp-306–Pro-340, Asn-341–Asp-371, and Lys-377–Lys-407. Residues Ile-412 to Asn-487 form a type E motif region. Residues Asn-488–Asp-518 form a type E(+) motif region.

It belongs to the PPR family. PCMP-E subfamily.

This is Pentatricopeptide repeat-containing protein At2g20540 (PCMP-E78) from Arabidopsis thaliana (Mouse-ear cress).